We begin with the raw amino-acid sequence, 362 residues long: Peptide chain release factor 1 (362 aa).

N5-methylglutamine is present on Q235.

Belongs to the prokaryotic/mitochondrial release factor family. Methylated by PrmC. Methylation increases the termination efficiency of RF1.

It localises to the cytoplasm. Functionally, peptide chain release factor 1 directs the termination of translation in response to the peptide chain termination codons UAG and UAA. The chain is Peptide chain release factor 1 from Acinetobacter baylyi (strain ATCC 33305 / BD413 / ADP1).